The chain runs to 186 residues: MKKLLLPALLTFSATPALAAKGPFFSLANTDFIVLISFIAFIGVLVYFKIPGILSGMLDKRAEGIKAELEEAKALREEAQTLLASYERKQREVQAQADAIVATAKEDAEAAAAQAKVDLEASIARRLATAEDQLASAQAAAIKEVKDKAVTVAIAAAADVISSKLGKAELNALNADAIKEVKAKLH.

A helical membrane pass occupies residues 5-25 (LLPALLTFSATPALAAKGPFF).

This sequence belongs to the ATPase B chain family. As to quaternary structure, F-type ATPases have 2 components, F(1) - the catalytic core - and F(0) - the membrane proton channel. F(1) has five subunits: alpha(3), beta(3), gamma(1), delta(1), epsilon(1). F(0) has three main subunits: a(1), b(2) and c(10-14). The alpha and beta chains form an alternating ring which encloses part of the gamma chain. F(1) is attached to F(0) by a central stalk formed by the gamma and epsilon chains, while a peripheral stalk is formed by the delta and b chains.

The protein resides in the cell inner membrane. Functionally, f(1)F(0) ATP synthase produces ATP from ADP in the presence of a proton or sodium gradient. F-type ATPases consist of two structural domains, F(1) containing the extramembraneous catalytic core and F(0) containing the membrane proton channel, linked together by a central stalk and a peripheral stalk. During catalysis, ATP synthesis in the catalytic domain of F(1) is coupled via a rotary mechanism of the central stalk subunits to proton translocation. In terms of biological role, component of the F(0) channel, it forms part of the peripheral stalk, linking F(1) to F(0). The sequence is that of ATP synthase subunit b 3 from Dinoroseobacter shibae (strain DSM 16493 / NCIMB 14021 / DFL 12).